A 277-amino-acid chain; its full sequence is Large ribosomal subunit protein uL2 (277 aa).

Positions 222–277 (GVAMNPVDHPHGGGEGRTSGGRHPVSPWGKPTKGKRTRSNKATDKFIMRSRHQRKK) are disordered.

This sequence belongs to the universal ribosomal protein uL2 family. Part of the 50S ribosomal subunit. Forms a bridge to the 30S subunit in the 70S ribosome.

One of the primary rRNA binding proteins. Required for association of the 30S and 50S subunits to form the 70S ribosome, for tRNA binding and peptide bond formation. It has been suggested to have peptidyltransferase activity; this is somewhat controversial. Makes several contacts with the 16S rRNA in the 70S ribosome. This Bartonella bacilliformis (strain ATCC 35685 / KC583 / Herrer 020/F12,63) protein is Large ribosomal subunit protein uL2.